Reading from the N-terminus, the 354-residue chain is Trans-L-3-hydroxyproline dehydratase (354 aa).

Catalysis depends on C104, which acts as the Proton acceptor. Residues 105–106 (GH), D269, and 274–275 (GS) each bind substrate.

It belongs to the proline racemase family. As to quaternary structure, homodimer.

The enzyme catalyses trans-3-hydroxy-L-proline = 1-pyrroline-2-carboxylate + H2O. In terms of biological role, catalyzes the dehydration of trans-3-hydroxy-L-proline to delta-1-pyrroline-2-carboxylate (Pyr2C). This is Trans-L-3-hydroxyproline dehydratase (L3HYPDH) from Pongo abelii (Sumatran orangutan).